The primary structure comprises 923 residues: MSLSTTAFPSLQGENMSRSPIPRHRALLAGFCLAGALSAQAATQEEILDAALVSGDSSQLTDSHLVALRLQQQVERIRQTRTQLLDGLYQNLSQAYDPGAASMWVLPANPDNTLPFLIGDKGRVLASLSLEAGGRGLAYGTNVLTQLSGTNAAHAPLLKRAVQWLVNGDPGAATAKDFKVSVVGVDKTAALNGLKSAGLQPADAACNALTDASCASTSKLLVLGNGASAASLSATVRARLQAGLPILFVHTNGWNQSSTGQQILAGLGLQEGPYGGNYWDKDRVPSSRTRTRSVELGGAYGQDPALVQQIVDGSWRTDYDWSKCTSYVGRTTCDDVPGLSDFSKRVDVLKGALDAYNQKAQNLFALPGTTSLRLWLLWADAVRQNIRYPMDKAADTARFQETFVADAIVGYVREAGAAQKELGSYAGQRQQSMPVSGSEETLTLTLPSAQGFTAIGRMAAPGKRLSIRIEDAGQASLAVGLNTQRIGSTRLWNTRQYDRPRFLKSPDIKLQANQSVALVSPYGGLLQLVYSGATPGQTVTVKVTGAASQPFLDIQPGEDSSQAIADFIQALDADKADWLEIRSGSVEVHAKVEKVRGSIDKDYGGDVQRFIRELNEVFIDDAYTLAGFAIPNQAKTPAIQQECAARGWDCDSETLHKLPGTQHINVDQYAQCGGGCSGNPYDQTWGLNPRGWGESHELGHNLQVNRLKVYGGRSGEISNQIFPLHKDWRVLREFGQNLDDTRVNYRNAYNLIVAGRAEADPLAGVYKRLWEDPGTYALNGERMAFYTQWVHYWADLKNDPLQGWDIWTLLYLHQRQVDKSDWDANKAALGYGTYAQRPGNSGDASSTDGNDNLLLGLSWLTQRDQRPTFALWGIRTSAAAQAQVAAYGFAEQPAFFYANNRTNEYSTVKLLDMSQGSPAWPFP.

The signal sequence occupies residues 1–41 (MSLSTTAFPSLQGENMSRSPIPRHRALLAGFCLAGALSAQA). Residues 450–794 (QGFTAIGRMA…FYTQWVHYWA (345 aa)) enclose the Peptidase M60 domain. Zn(2+) is bound at residue histidine 696. Residue glutamate 697 is part of the active site. Histidine 700 is a binding site for Zn(2+).

The protein belongs to the peptidase M88 family. Zn(2+) is required as a cofactor.

The protein resides in the secreted. Its activity is regulated as follows. Proteolytic activity is blocked in the presence of EDTA. In terms of biological role, protease that degrades several proteins of the host immune system. Cleaves P-selectin glycoprotein ligand-1 (PSGL-1), leading to its functional inhibition; PSGL-1 is a leukocyte cell-surface receptor essential for leukocyte recruitment to the site of infection. Next to PSGL-1, targets host CD43 and CD44 that are also involved in leukocyte homing. Thus, prevents neutrophil extravasation and thereby protects P.aeruginosa from neutrophil attack. Is also able to inhibit the decay accelerating factor (CD55), but not the cell-surface receptors CD46 and CD31. The polypeptide is Immunomodulating metalloprotease (Pseudomonas aeruginosa (strain ATCC 15692 / DSM 22644 / CIP 104116 / JCM 14847 / LMG 12228 / 1C / PRS 101 / PAO1)).